Here is a 351-residue protein sequence, read N- to C-terminus: Nicotinate-nucleotide--dimethylbenzimidazole phosphoribosyltransferase (351 aa).

Residue E313 is the Proton acceptor of the active site.

It belongs to the CobT family.

The catalysed reaction is 5,6-dimethylbenzimidazole + nicotinate beta-D-ribonucleotide = alpha-ribazole 5'-phosphate + nicotinate + H(+). It functions in the pathway nucleoside biosynthesis; alpha-ribazole biosynthesis; alpha-ribazole from 5,6-dimethylbenzimidazole: step 1/2. Its function is as follows. Catalyzes the synthesis of alpha-ribazole-5'-phosphate from nicotinate mononucleotide (NAMN) and 5,6-dimethylbenzimidazole (DMB). This Mycobacterium leprae (strain Br4923) protein is Nicotinate-nucleotide--dimethylbenzimidazole phosphoribosyltransferase.